The primary structure comprises 299 residues: Protein translocase subunit SecF (299 aa).

6 consecutive transmembrane segments (helical) span residues 14-34 (VLIV…FYHG), 142-162 (IFLV…RFKL), 166-186 (IASI…LGVF), 193-213 (YIIV…IIIF), 245-265 (LTSV…EGSI), and 270-290 (LVFM…ASPI).

It belongs to the SecD/SecF family. SecF subfamily. In terms of assembly, forms a complex with SecD. Part of the essential Sec protein translocation apparatus which comprises SecA, SecYEG and auxiliary proteins SecDF. Other proteins may also be involved.

It is found in the cell inner membrane. In terms of biological role, part of the Sec protein translocase complex. Interacts with the SecYEG preprotein conducting channel. SecDF uses the proton motive force (PMF) to complete protein translocation after the ATP-dependent function of SecA. This chain is Protein translocase subunit SecF, found in Borreliella burgdorferi (strain ATCC 35210 / DSM 4680 / CIP 102532 / B31) (Borrelia burgdorferi).